A 131-amino-acid chain; its full sequence is MDKVDKSLDTWREELTDEQFHVCRLGGTERPFTGAYHDSKTPGIYHCACCGEALFDSDAKYDSGSGWPSYFQPINDEVIASLDDYSHGMHRIEVKCAKCDAHLGHVFPDGPRPTGLRYCINSLSLKLVPRD.

Residues 8–130 (LDTWREELTD…NSLSLKLVPR (123 aa)) form the MsrB domain. Residues C47, C50, C96, and C99 each contribute to the Zn(2+) site. C119 serves as the catalytic Nucleophile.

Belongs to the MsrB Met sulfoxide reductase family. Zn(2+) is required as a cofactor.

The enzyme catalyses L-methionyl-[protein] + [thioredoxin]-disulfide + H2O = L-methionyl-(R)-S-oxide-[protein] + [thioredoxin]-dithiol. The sequence is that of Peptide methionine sulfoxide reductase MsrB from Ectopseudomonas mendocina (strain ymp) (Pseudomonas mendocina).